A 150-amino-acid chain; its full sequence is Snaclec CTL-Eoc125 (150 aa).

An N-terminal signal peptide occupies residues Met1 to Ala23. Disulfide bonds link Cys27/Cys38, Cys55/Cys144, and Cys121/Cys136. In terms of domain architecture, C-type lectin spans Tyr34–Lys145.

This sequence belongs to the snaclec family. Heterodimer; disulfide-linked. Expressed by the venom gland.

It localises to the secreted. Interferes with one step of hemostasis (modulation of platelet aggregation, or coagulation cascade, for example). The sequence is that of Snaclec CTL-Eoc125 from Echis ocellatus (Ocellated saw-scaled viper).